Consider the following 414-residue polypeptide: Probable 1-acylglycerol-3-phosphate O-acyltransferase (414 aa).

One can recognise an AB hydrolase-1 domain in the interval 117-382 (PTLVMVHGYG…GGHFVFIDNP (266 aa)). The short motif at 193 to 197 (GHSFG) is the GXSXG element. The short motif at 375–380 (HFVFID) is the HXXXXD motif element.

The protein belongs to the peptidase S33 family. ABHD4/ABHD5 subfamily.

Its subcellular location is the cytoplasm. It catalyses the reaction a 1-acyl-sn-glycero-3-phosphate + an acyl-CoA = a 1,2-diacyl-sn-glycero-3-phosphate + CoA. Functionally, lysophosphatidic acid acyltransferase which functions in phosphatidic acid biosynthesis. May regulate neutral lipid accumulation and participate in the regulation of lipid turnover in vegetative cells. May possess additional triacylglycerol lipase and phospholipase A2 activities in vitro. This is Probable 1-acylglycerol-3-phosphate O-acyltransferase from Oryza sativa subsp. japonica (Rice).